The primary structure comprises 308 residues: Probable 5-dehydro-4-deoxyglucarate dehydratase (308 aa).

This sequence belongs to the DapA family.

The catalysed reaction is 5-dehydro-4-deoxy-D-glucarate + H(+) = 2,5-dioxopentanoate + CO2 + H2O. It functions in the pathway carbohydrate acid metabolism; D-glucarate degradation; 2,5-dioxopentanoate from D-glucarate: step 2/2. In Bacillus subtilis (strain 168), this protein is Probable 5-dehydro-4-deoxyglucarate dehydratase (ycbC).